Here is a 163-residue protein sequence, read N- to C-terminus: Epithelial membrane protein 3 (163 aa).

Residues 4-24 (LLLVVSALHILILVLLFVATL) form a helical membrane-spanning segment. N-linked (GlcNAc...) asparagine glycosylation is found at Asn-46 and Asn-56. 3 helical membrane passes run 66 to 86 (VQALMVLSLILCCLSFILFMF), 100 to 120 (TGLCQLCTSAAVFSGALIYAI), and 139 to 159 (FALAWVAFPLALVSGTVYIHL).

The protein belongs to the PMP-22/EMP/MP20 family.

The protein resides in the membrane. Its function is as follows. Probably involved in cell proliferation and cell-cell interactions. The sequence is that of Epithelial membrane protein 3 (Emp3) from Mus musculus (Mouse).